The primary structure comprises 189 residues: GTPase NRas (189 aa).

Residues 10–18 and 29–30 each bind GTP; these read GAGGVGKSA and VD. An Effector region motif is present at residues 32-40; sequence YDPTIEDSY. 57 to 61 lines the GTP pocket; that stretch reads DTAGQ. Ser-89 bears the Phosphoserine mark. 116-119 contributes to the GTP binding site; it reads NKCD. Residues 166-185 are hypervariable region; sequence YRMKKLNSSEDGTQGCMGLP. Lys-170 is covalently cross-linked (Glycyl lysine isopeptide (Lys-Gly) (interchain with G-Cter in ubiquitin)). Cys-181 is lipidated: S-palmitoyl cysteine. Cys-186 is lipidated: S-farnesyl cysteine. Positions 187–189 are cleaved as a propeptide — removed in mature form; the sequence is VVM.

It belongs to the small GTPase superfamily. Ras family. Interacts (active GTP-bound form preferentially) with RGS14. Interacts (active GTP-bound form) with RASSF7. Interacts (active GTP-bound form) with both SHOC2 and PP1c (all isoforms) to form a tertiary complex; SHOC2 and PP1c preferably bind M-Ras/MRAS, but they also bind K-Ras/KRAS, N-Ras/NRAS and H-Ras/HRAS. Palmitoylated by the ZDHHC9-GOLGA7 complex. Depalmitoylated by ABHD17A, ABHD17B and ABHD17C. A continuous cycle of de- and re-palmitoylation regulates rapid exchange between plasma membrane and Golgi. In terms of processing, acetylation at Lys-104 prevents interaction with guanine nucleotide exchange factors (GEFs). Post-translationally, ubiquitinated by the BCR(LZTR1) E3 ubiquitin ligase complex at Lys-170 in a non-degradative manner, leading to inhibit Ras signaling by decreasing Ras association with membranes. Phosphorylation at Ser-89 enhances NRAS association with its downstream effectors.

Its subcellular location is the cell membrane. It localises to the golgi apparatus membrane. The enzyme catalyses GTP + H2O = GDP + phosphate + H(+). Alternates between an inactive form bound to GDP and an active form bound to GTP. Activated by a guanine nucleotide-exchange factor (GEF) and inactivated by a GTPase-activating protein (GAP). In terms of biological role, ras proteins bind GDP/GTP and possess intrinsic GTPase activity. This is GTPase NRas (Nras) from Rattus norvegicus (Rat).